The following is a 516-amino-acid chain: D-alanine--D-alanyl carrier protein ligase (516 aa).

156-157 (TS) is an ATP binding site. Asp-203 contacts D-alanine. Residue 298–303 (NAYGPT) participates in ATP binding. Val-307 provides a ligand contact to D-alanine. ATP contacts are provided by residues Asp-389, 401–404 (YGGR), and Lys-503. Residue Lys-503 coordinates D-alanine.

It belongs to the ATP-dependent AMP-binding enzyme family. DltA subfamily.

Its subcellular location is the cytoplasm. It catalyses the reaction holo-[D-alanyl-carrier protein] + D-alanine + ATP = D-alanyl-[D-alanyl-carrier protein] + AMP + diphosphate. It participates in cell wall biogenesis; lipoteichoic acid biosynthesis. Functionally, catalyzes the first step in the D-alanylation of lipoteichoic acid (LTA), the activation of D-alanine and its transfer onto the D-alanyl carrier protein (Dcp) DltC. In an ATP-dependent two-step reaction, forms a high energy D-alanyl-AMP intermediate, followed by transfer of the D-alanyl residue as a thiol ester to the phosphopantheinyl prosthetic group of the Dcp. D-alanylation of LTA plays an important role in modulating the properties of the cell wall in Gram-positive bacteria, influencing the net charge of the cell wall. The polypeptide is D-alanine--D-alanyl carrier protein ligase (Streptococcus pneumoniae serotype 4 (strain ATCC BAA-334 / TIGR4)).